The primary structure comprises 1175 residues: Beta-agarase AgaO (1175 aa).

Residues 1–29 (MRLSKSQGILPLAHAVLAAAIAYSTAATA) form the signal peptide. Positions 32-164 (YRLEAEDFTN…QWNLDKMELA (133 aa)) constitute a CBM6 1 domain. The disordered stretch occupies residues 169 to 208 (SSSSSGGGSTSSSSSGGSSSSSGSGSSSSGGSPEEGGHVS). Residues 178-200 (TSSSSSGGSSSSSGSGSSSSGGS) are compositionally biased toward low complexity. In terms of domain architecture, CBM6 2 spans 211-339 (FKLEAESAHH…QFNIDYVIFE (129 aa)). The segment at 355-481 (IADVNDSCPG…ESGCSPSQVA (127 aa)) is disordered. The segment covering 382-393 (DTDKDGIADNRD) has biased composition (basic and acidic residues). Polar residues predominate over residues 471–481 (NESGCSPSQVA). Glutamate 661 (proton donor) is an active-site residue. Glutamate 832 serves as the catalytic Nucleophile.

It belongs to the glycosyl hydrolase 86 family.

It catalyses the reaction Hydrolysis of (1-&gt;4)-beta-D-galactosidic linkages in agarose, giving the tetramer as the predominant product.. Activity and stability are strongly enhanced by CaCl(2). Activity is not affected by sulfhydryl inhibitors such as iodoacetoamide and p-chloromercuribenzoate or by thiol reagents such as dithiothreitol and 2-mercaptoethanol. Strongly inhibited by N-bromosuccinimide and sodium dodecyl sulfate. Functionally, endo-type beta-agarase, which degrades agarose and agarose oligosaccharides more polymerized than hexamers to yield neoagarohexaose (NA6) as the main product, with lesser amounts of neoagarotetraose (NA4) and neoagarobiose (NA2). The protein is Beta-agarase AgaO of Microbulbifer thermotolerans.